The sequence spans 97 residues: Prophage lipoprotein Bor homolog (97 aa).

Residues 1–16 form the signal peptide; sequence MKKMLLATALALLITG. Cysteine 17 carries N-palmitoyl cysteine lipidation. A lipid anchor (S-diacylglycerol cysteine) is attached at cysteine 17.

It belongs to the lambda phage bor family.

It is found in the cell membrane. The chain is Prophage lipoprotein Bor homolog (borD) from Escherichia coli (strain K12).